Reading from the N-terminus, the 185-residue chain is HTH-type transcriptional repressor OpcR (185 aa).

Residues 49 to 73 (LSELSEATGMSKTRMSQVVREMIDA) constitute a DNA-binding region (H-T-H motif).

It belongs to the GbsR family.

Is not choline-responsive. Functionally, negatively regulates the transcription of the opuC operon. In the absence of GbsR, is also a negative regulator of the opuB operon. Binds to an inverted repeat in the promoter region of the operons. This is HTH-type transcriptional repressor OpcR (opcR) from Bacillus subtilis (strain 168).